The primary structure comprises 312 residues: Acetyl-coenzyme A carboxylase carboxyl transferase subunit beta (312 aa).

The segment at 1–52 (MEMDTAVENPAVEKNGQPTPSSTSTATDAAPTPNAPNRPAPNTAGNRKRGVP) is disordered. Positions 18-32 (PTPSSTSTATDAAPT) are enriched in low complexity. One can recognise a CoA carboxyltransferase N-terminal domain in the interval 55 to 312 (VWRKCDSCGA…IATAIDYCGK (258 aa)). Zn(2+)-binding residues include Cys-59, Cys-62, Cys-78, and Cys-81. A C4-type zinc finger spans residues 59-81 (CDSCGASLFYKEVQQRLNVCPQC).

Belongs to the AccD/PCCB family. Acetyl-CoA carboxylase is a heterohexamer composed of biotin carboxyl carrier protein (AccB), biotin carboxylase (AccC) and two subunits each of ACCase subunit alpha (AccA) and ACCase subunit beta (AccD). The cofactor is Zn(2+).

It is found in the cytoplasm. The catalysed reaction is N(6)-carboxybiotinyl-L-lysyl-[protein] + acetyl-CoA = N(6)-biotinyl-L-lysyl-[protein] + malonyl-CoA. It participates in lipid metabolism; malonyl-CoA biosynthesis; malonyl-CoA from acetyl-CoA: step 1/1. In terms of biological role, component of the acetyl coenzyme A carboxylase (ACC) complex. Biotin carboxylase (BC) catalyzes the carboxylation of biotin on its carrier protein (BCCP) and then the CO(2) group is transferred by the transcarboxylase to acetyl-CoA to form malonyl-CoA. The chain is Acetyl-coenzyme A carboxylase carboxyl transferase subunit beta from Rhodopirellula baltica (strain DSM 10527 / NCIMB 13988 / SH1).